The sequence spans 33 residues: Protamine TP14 (33 aa).

A disordered region spans residues 1 to 33 (MPRRRRSSRPPVRRRRRPRVSRRRRRRGGRRRR).

As to expression, testis.

It localises to the nucleus. Its subcellular location is the chromosome. Its function is as follows. Protamines substitute for histones in the chromatin of sperm during the haploid phase of spermatogenesis. They compact sperm DNA into a highly condensed, stable and inactive complex. This is Protamine TP14 from Oncorhynchus mykiss (Rainbow trout).